We begin with the raw amino-acid sequence, 429 residues long: Enolase (429 aa).

Residue Gln163 participates in (2R)-2-phosphoglycerate binding. Glu205 serves as the catalytic Proton donor. 3 residues coordinate Mg(2+): Asp242, Glu285, and Asp312. Lys337, Arg366, Ser367, and Lys388 together coordinate (2R)-2-phosphoglycerate. Lys337 (proton acceptor) is an active-site residue.

Belongs to the enolase family. It depends on Mg(2+) as a cofactor.

The protein localises to the cytoplasm. It is found in the secreted. It localises to the cell surface. The catalysed reaction is (2R)-2-phosphoglycerate = phosphoenolpyruvate + H2O. The protein operates within carbohydrate degradation; glycolysis; pyruvate from D-glyceraldehyde 3-phosphate: step 4/5. Functionally, catalyzes the reversible conversion of 2-phosphoglycerate (2-PG) into phosphoenolpyruvate (PEP). It is essential for the degradation of carbohydrates via glycolysis. This chain is Enolase, found in Methylorubrum populi (strain ATCC BAA-705 / NCIMB 13946 / BJ001) (Methylobacterium populi).